The primary structure comprises 289 residues: Iodotyrosine deiodinase 1 (289 aa).

The helical transmembrane segment at 1 to 21 (MFLLTPVLVAVVCILMVWIFK) threads the bilayer. FMN is bound by residues 100 to 104 (RRSVR) and 128 to 129 (SG). Residues A130, E157, Y161, and K182 each contribute to the 3,5-diiodo-L-tyrosine site. Residues A130, E157, Y161, and K182 each contribute to the 3-iodo-L-tyrosine site. FMN contacts are provided by residues 237–239 (TTT) and R279.

It belongs to the nitroreductase family. In terms of assembly, homodimer. FMN is required as a cofactor. As to expression, detected in thyroid (at protein level).

The protein localises to the cell membrane. The protein resides in the cytoplasmic vesicle membrane. The catalysed reaction is 2 iodide + L-tyrosine + 2 NADP(+) = 3,5-diiodo-L-tyrosine + 2 NADPH + H(+). It carries out the reaction iodide + L-tyrosine + NADP(+) = 3-iodo-L-tyrosine + NADPH. It catalyses the reaction 3-iodo-L-tyrosine + iodide + NADP(+) = 3,5-diiodo-L-tyrosine + NADPH + H(+). The enzyme catalyses L-tyrosine + chloride + NADP(+) = 3-chloro-L-tyrosine + NADPH. The catalysed reaction is bromide + L-tyrosine + NADP(+) = 3-bromo-L-tyrosine + NADPH. Functionally, catalyzes the dehalogenation of halotyrosines such as 3-bromo-L-tyrosine, 3-chloro-L-tyrosine, 3-iodo-L-tyrosine and 3,5-diiodo-L-tyrosine. During thyroid hormone biosynthesis, facilitates iodide salvage by catalysing the oxidative NADPH-dependent deiodination of the halogenated by-products of thyroid hormone production, monoiodotyrosine (L-MIT) and diiodotyrosine (L-DIT). The scavanged iodide can then reenter the hormone-producing pathways. Acts more efficiently on 3-iodo-L-tyrosine than 3,5-diiodo-L-tyrosine. The chain is Iodotyrosine deiodinase 1 (IYD) from Sus scrofa (Pig).